Consider the following 553-residue polypeptide: Terpene synthase 16 (553 aa).

Positions 303, 307, and 457 each coordinate Mg(2+). The DDXXD motif motif lies at aspartate 303 to aspartate 307.

The protein belongs to the terpene synthase family. Tpsa subfamily. It depends on Mg(2+) as a cofactor. The cofactor is Mn(2+). As to expression, expressed in leaves, trichomes and flowers.

Its pathway is secondary metabolite biosynthesis; terpenoid biosynthesis. Functionally, sesquiterpene synthase involved in the biosynthesis of volatile compounds. No activity detected with geranyl diphosphate (GPP) and farnesyl diphosphate (FPP) as substrates. This Solanum lycopersicum (Tomato) protein is Terpene synthase 16.